Consider the following 218-residue polypeptide: Hypoxanthine-guanine phosphoribosyltransferase (218 aa).

Alanine 2 carries the post-translational modification N-acetylalanine. Lysine 69 is a GMP binding site. Lysine 103 carries the N6-acetyllysine modification. Lysine 115 participates in a covalent cross-link: Glycyl lysine isopeptide (Lys-Gly) (interchain with G-Cter in SUMO1); alternate. Lysine 115 participates in a covalent cross-link: Glycyl lysine isopeptide (Lys-Gly) (interchain with G-Cter in SUMO2); alternate. Residues 134-142 (EDIIDTGKT), lysine 166, 186-188 (KFV), and aspartate 194 each bind GMP. The active-site Proton acceptor is aspartate 138. Residue threonine 142 is modified to Phosphothreonine. Aspartate 194 provides a ligand contact to Mg(2+).

It belongs to the purine/pyrimidine phosphoribosyltransferase family. As to quaternary structure, homotetramer. It depends on Mg(2+) as a cofactor.

Its subcellular location is the cytoplasm. It carries out the reaction IMP + diphosphate = hypoxanthine + 5-phospho-alpha-D-ribose 1-diphosphate. The catalysed reaction is GMP + diphosphate = guanine + 5-phospho-alpha-D-ribose 1-diphosphate. It participates in purine metabolism; IMP biosynthesis via salvage pathway; IMP from hypoxanthine: step 1/1. Its function is as follows. Converts guanine to guanosine monophosphate, and hypoxanthine to inosine monophosphate. Transfers the 5-phosphoribosyl group from 5-phosphoribosylpyrophosphate onto the purine. Plays a central role in the generation of purine nucleotides through the purine salvage pathway. This Pan troglodytes (Chimpanzee) protein is Hypoxanthine-guanine phosphoribosyltransferase (HPRT1).